Consider the following 4857-residue polypeptide: Dual E2 ubiquitin-conjugating enzyme/E3 ubiquitin-protein ligase BIRC6 (4857 aa).

2 WD repeats span residues 68–106 (DGLHSLSYHPALNAILAVTSRGTIKVIDGTSGATLQASA) and 107–136 (LSAKPGGQVKCQYISAVDKVIFVDDYAVGC). One copy of the BIR repeat lies at 268-377 (PELGVGPGRS…LSVTLATSPA (110 aa)). 4 residues coordinate Zn(2+): Cys-328, Cys-331, His-348, and Cys-355. The WD 3 repeat unit spans residues 379–426 (FPCTDGTDRISCFGSGSCPHFLAAATKRGKICIWDVSKLMKVHLKFEI). Disordered stretches follow at residues 465–498 (DIPKLEGDSDDLLEDSDSEEHSRSDSVTGHTSQK) and 579–618 (ATSPISSNSHRSLDGLSRTQGESISEQGSTDNESCTNSEL). Residues 472-482 (DSDDLLEDSDS) show a composition bias toward acidic residues. 5 positions are modified to phosphoserine: Ser-473, Ser-480, Ser-482, Ser-581, and Ser-590. 4 WD repeats span residues 501–720 (MEVS…VQCL), 730–850 (NLCI…QHIK), 851–927 (DPQD…AKVE), and 928–966 (PPKKEGTEEQDTFVSVIYCSGTDRLCACTKGGELHFLQI). The segment covering 579-588 (ATSPISSNSH) has biased composition (polar residues). The segment covering 595–618 (SRTQGESISEQGSTDNESCTNSEL) has biased composition (polar residues). Disordered regions lie at residues 984–1004 (LSKGIEPSSEGSKPLSNPSSP) and 1053–1073 (QQQRRHPQHLHQQHHGDAAQH). Over residues 992–1004 (SEGSKPLSNPSSP) the composition is skewed to polar residues. Positions 1056 to 1065 (RRHPQHLHQQ) are enriched in basic residues. Phosphothreonine is present on Thr-1710. Phosphoserine is present on residues Ser-2222 and Ser-2955. Positions 2945–2973 (SVTTNTTDSVSDEEKVSGGKDGNGSSTSV) are disordered. Positions 3189–3193 (HRRAR) are HRRAR loop; important for DIABLO/SMAC and HTRA2 binding. In terms of domain architecture, Ubiquitin-like spans 3819-4068 (DEKVTMFLQS…ESLLETCPIQ (250 aa)). The tract at residues 3923 to 3949 (QSKRAVSATPPRPPSRRGRTIPDKIGS) is disordered. Thr-3931 bears the Phosphothreonine mark. Residue Ser-4023 is modified to Phosphoserine. Residues 4260-4283 (RVPNSSVNQTEPQVSSSHNPTSTE) are disordered. The segment covering 4261–4283 (VPNSSVNQTEPQVSSSHNPTSTE) has biased composition (polar residues). Residues 4573-4740 (ARARRLAQEA…IRQATVKWAM (168 aa)) enclose the UBC core domain. Catalysis depends on Cys-4666, which acts as the Glycyl thioester intermediate. The tract at residues 4835 to 4857 (EETLMHDQVKPSSSKELPSDFQL) is disordered. A compositionally biased stretch (polar residues) spans 4844–4857 (KPSSSKELPSDFQL).

It belongs to the BIRC6 family. In terms of assembly, homodimer; antiparallel. Interacts with RNF41. Interacts with DIABLO/SMAC, likely with higher affinity to SMAC dimer than SMAC monomer; this interaction blocks the substrate-binding site and inhibits the caspase inhibition activity of BIRC6. Interacts with KIF23/MKLP1, USP8/UBPY, BIRC5/survivin, MAP2K1/MEK1, RAB8A/RAB8, RAB11A/RAB11, PLK1, EXOC3/SEC6 and EXOC4/SEC8. Post-translationally, ubiquitinated; mediated by RNF41 E3 ligase and leads to proteasomal degradation, impairing inhibition of apoptosis. Deubiquitinated by USP8/UBPY. Autoubiquitinated; mediated by E1 ubiquitin activating enzyme UBA6. In terms of processing, proteolytically cleaved. Acts as substrate for CASP3, CASP6, CASP7, CASP9 and HTRA2. As to expression, expressed in brain cancer cells.

The protein localises to the golgi apparatus. The protein resides in the trans-Golgi network membrane. It is found in the endosome. Its subcellular location is the cytoplasm. It localises to the cytoskeleton. The protein localises to the spindle pole. The protein resides in the microtubule organizing center. It is found in the centrosome. Its subcellular location is the midbody. It localises to the midbody ring. It catalyses the reaction S-ubiquitinyl-[E1 ubiquitin-activating enzyme]-L-cysteine + [acceptor protein]-L-lysine = [E1 ubiquitin-activating enzyme]-L-cysteine + N(6)-monoubiquitinyl-[acceptor protein]-L-lysine.. Inhibited by DIABLO/SMAC, which competes for the substrate-binding sites on BIRC6. BIRC6 inhibits caspases and protease by ubiquitination but BIRC6 itself is subjected to protease cleavage by CASP3, CASP6, CASP7, CASP9 and HTRA2 by protease cleavage. Functionally, anti-apoptotic protein known as inhibitor of apoptosis (IAP) which can regulate cell death by controlling caspases and by acting as an E3 ubiquitin-protein ligase. Unlike most IAPs, does not contain a RING domain and it is not a RING-type E3 ligase. Instead acts as a dual E2/E3 enzyme that combines ubiquitin conjugating (E2) and ubiquitin ligase (E3) activities in a single polypeptide. Ubiquitination is mediated by a non-canonical E1 ubiquitin activating enzyme UBA6. Ubiquitinates CASP3, CASP7 and CASP9 and inhibits their caspase activity; also ubiquitinates their procaspases but to a weaker extent. Ubiquitinates pro-apoptotic factors DIABLO/SMAC and HTRA2. DIABLO/SMAC antagonizes the caspase inhibition activity of BIRC6 by competing for the same binding sites as the caspases. Ubiquitinates the autophagy protein MAP1LC3B; this activity is also inhibited by DIABLO/SMAC. Important regulator for the final stages of cytokinesis. Crucial for normal vesicle targeting to the site of abscission, but also for the integrity of the midbody and the midbody ring, and its striking ubiquitin modification. The protein is Dual E2 ubiquitin-conjugating enzyme/E3 ubiquitin-protein ligase BIRC6 (BIRC6) of Homo sapiens (Human).